A 346-amino-acid polypeptide reads, in one-letter code: NADH-ubiquinone oxidoreductase chain 2 (346 aa).

A run of 10 helical transmembrane segments spans residues 25–45, 60–80, 95–115, 124–144, 149–169, 178–195, 200–219, 247–267, 274–294, and 326–346; these read HWVL…PLIS, FLTQ…NAWA, CLLL…HFWF, LMTA…LLLM, LNPA…GWMG, ILAF…IILV, LALL…FMAL, VLLS…WLII, EMTP…FFYL, and AILA…HAIV.

It belongs to the complex I subunit 2 family.

Its subcellular location is the mitochondrion inner membrane. It catalyses the reaction a ubiquinone + NADH + 5 H(+)(in) = a ubiquinol + NAD(+) + 4 H(+)(out). Its function is as follows. Core subunit of the mitochondrial membrane respiratory chain NADH dehydrogenase (Complex I) that is believed to belong to the minimal assembly required for catalysis. Complex I functions in the transfer of electrons from NADH to the respiratory chain. The immediate electron acceptor for the enzyme is believed to be ubiquinone. The polypeptide is NADH-ubiquinone oxidoreductase chain 2 (MT-ND2) (Anas capensis (Cape teal)).